Here is a 173-residue protein sequence, read N- to C-terminus: Co-chaperone protein HscB homolog (173 aa).

Positions 3-75 (NPFALFDLPI…ILRADCIIAL (73 aa)) constitute a J domain.

It belongs to the HscB family. Interacts with HscA and stimulates its ATPase activity.

Functionally, co-chaperone involved in the maturation of iron-sulfur cluster-containing proteins. Seems to help targeting proteins to be folded toward HscA. The protein is Co-chaperone protein HscB homolog of Mannheimia succiniciproducens (strain KCTC 0769BP / MBEL55E).